We begin with the raw amino-acid sequence, 494 residues long: DEAD-box ATP-dependent RNA helicase 20 (494 aa).

Basic and acidic residues predominate over residues 1 to 20 (MSRFDGRAADPGSYRDRRSE). Residues 1-39 (MSRFDGRAADPGSYRDRRSEGAFGGGTRAFAPTSKADSA) are disordered. Low complexity predominate over residues 29–39 (AFAPTSKADSA). The Q motif signature appears at 91–119 (REFRDVGFPEYVLQEITKAGFVEPTPIQS). The Helicase ATP-binding domain occupies 122–297 (WPMALRGRDL…RNFLFDPYKV (176 aa)). 135 to 142 (AETGSGKT) contributes to the ATP binding site. The short motif at 245–248 (DEAD) is the DEAD box element. Residues 325–470 (KLVNLLEDIM…KVSPELANMG (146 aa)) enclose the Helicase C-terminal domain. A disordered region spans residues 465–494 (ELANMGRGAPPPSSGHRDRYRGYGGGRSWS).

This sequence belongs to the DEAD box helicase family. DDX5/DBP2 subfamily.

It is found in the nucleus. It carries out the reaction ATP + H2O = ADP + phosphate + H(+). Its function is as follows. ATP-dependent RNA helicase involved nonsense-mediated mRNA decay and ribosome biogenesis through rRNA processing. The protein is DEAD-box ATP-dependent RNA helicase 20 of Oryza sativa subsp. japonica (Rice).